A 572-amino-acid polypeptide reads, in one-letter code: Probable D-xylulose kinase A (572 aa).

The substrate site is built by His-95, Arg-166, Asp-282, and Asn-283. ATP contacts are provided by residues Trp-365, 470–471, and Asn-474; that span reads GG.

This sequence belongs to the FGGY kinase family.

The protein localises to the cytoplasm. It carries out the reaction D-xylulose + ATP = D-xylulose 5-phosphate + ADP + H(+). Functionally, highly specific D-xylulose kinase which participates in the catabolism of xylose. Xylose is a major component of hemicelluloses such as xylan. Most fungi utilize D-xylose via three enzymatic reactions, xylose reductase (XR), xylitol dehydrogenase (XDH), and xylulokinase, to form xylulose 5-phosphate, which enters pentose phosphate pathway. The protein is Probable D-xylulose kinase A (xkiA) of Aspergillus flavus (strain ATCC 200026 / FGSC A1120 / IAM 13836 / NRRL 3357 / JCM 12722 / SRRC 167).